The primary structure comprises 633 residues: UvrABC system protein C (633 aa).

Positions 37 to 115 constitute a GIY-YIG domain; the sequence is PKPGVYRMFG…IKSLKPRFNI (79 aa). Residues 225-260 enclose the UVR domain; sequence NALREDLQTRMAQASEAMDFETAAKLRDRIRAIAAV.

The protein belongs to the UvrC family. Interacts with UvrB in an incision complex.

The protein resides in the cytoplasm. In terms of biological role, the UvrABC repair system catalyzes the recognition and processing of DNA lesions. UvrC both incises the 5' and 3' sides of the lesion. The N-terminal half is responsible for the 3' incision and the C-terminal half is responsible for the 5' incision. In Maricaulis maris (strain MCS10) (Caulobacter maris), this protein is UvrABC system protein C.